The chain runs to 304 residues: Large ribosomal subunit protein uL18y (304 aa).

The protein belongs to the universal ribosomal protein uL18 family. As to quaternary structure, component of the large ribosomal subunit (LSU).

The protein resides in the cytoplasm. It localises to the nucleus. Its function is as follows. Component of the ribosome, a large ribonucleoprotein complex responsible for the synthesis of proteins in the cell. The small ribosomal subunit (SSU) binds messenger RNAs (mRNAs) and translates the encoded message by selecting cognate aminoacyl-transfer RNA (tRNA) molecules. The large subunit (LSU) contains the ribosomal catalytic site termed the peptidyl transferase center (PTC), which catalyzes the formation of peptide bonds, thereby polymerizing the amino acids delivered by tRNAs into a polypeptide chain. The nascent polypeptides leave the ribosome through a tunnel in the LSU and interact with protein factors that function in enzymatic processing, targeting, and the membrane insertion of nascent chains at the exit of the ribosomal tunnel. The protein is Large ribosomal subunit protein uL18y (RPL5B) of Oryza sativa subsp. japonica (Rice).